The primary structure comprises 170 residues: Interferon gamma (170 aa).

A signal peptide spans 1–20 (MNSRLCIMALLLCFSQALLG). N36 and N103 each carry an N-linked (GlcNAc...) asparagine glycan.

The protein belongs to the type II (or gamma) interferon family. In terms of assembly, homodimer. Interacts with IFNGR1 (via extracellular domain); this interaction promotes IFNGR1 dimerization. As to expression, released primarily from activated T lymphocytes.

It is found in the secreted. Functionally, type II interferon produced by immune cells such as T-cells and NK cells that plays crucial roles in antimicrobial, antiviral, and antitumor responses by activating effector immune cells and enhancing antigen presentation. Primarily signals through the JAK-STAT pathway after interaction with its receptor IFNGR1 to affect gene regulation. Upon IFNG binding, IFNGR1 intracellular domain opens out to allow association of downstream signaling components JAK2, JAK1 and STAT1, leading to STAT1 activation, nuclear translocation and transcription of IFNG-regulated genes. Many of the induced genes are transcription factors such as IRF1 that are able to further drive regulation of a next wave of transcription. Plays a role in class I antigen presentation pathway by inducing a replacement of catalytic proteasome subunits with immunoproteasome subunits. In turn, increases the quantity, quality, and repertoire of peptides for class I MHC loading. Increases the efficiency of peptide generation also by inducing the expression of activator PA28 that associates with the proteasome and alters its proteolytic cleavage preference. Up-regulates as well MHC II complexes on the cell surface by promoting expression of several key molecules such as cathepsins B/CTSB, H/CTSH, and L/CTSL. Participates in the regulation of hematopoietic stem cells during development and under homeostatic conditions by affecting their development, quiescence, and differentiation. In Sigmodon hispidus (Hispid cotton rat), this protein is Interferon gamma (IFNG).